A 316-amino-acid polypeptide reads, in one-letter code: 4-hydroxy-3-methylbut-2-enyl diphosphate reductase (316 aa).

C12 contributes to the [4Fe-4S] cluster binding site. H41 and H74 together coordinate (2E)-4-hydroxy-3-methylbut-2-enyl diphosphate. Positions 41 and 74 each coordinate dimethylallyl diphosphate. The isopentenyl diphosphate site is built by H41 and H74. A [4Fe-4S] cluster-binding site is contributed by C96. H124 provides a ligand contact to (2E)-4-hydroxy-3-methylbut-2-enyl diphosphate. Residue H124 coordinates dimethylallyl diphosphate. H124 contacts isopentenyl diphosphate. The active-site Proton donor is E126. T165 is a binding site for (2E)-4-hydroxy-3-methylbut-2-enyl diphosphate. C195 is a binding site for [4Fe-4S] cluster. 4 residues coordinate (2E)-4-hydroxy-3-methylbut-2-enyl diphosphate: S223, S224, N225, and S267. Dimethylallyl diphosphate contacts are provided by S223, S224, N225, and S267. S223, S224, N225, and S267 together coordinate isopentenyl diphosphate.

It belongs to the IspH family. It depends on [4Fe-4S] cluster as a cofactor.

The catalysed reaction is isopentenyl diphosphate + 2 oxidized [2Fe-2S]-[ferredoxin] + H2O = (2E)-4-hydroxy-3-methylbut-2-enyl diphosphate + 2 reduced [2Fe-2S]-[ferredoxin] + 2 H(+). It catalyses the reaction dimethylallyl diphosphate + 2 oxidized [2Fe-2S]-[ferredoxin] + H2O = (2E)-4-hydroxy-3-methylbut-2-enyl diphosphate + 2 reduced [2Fe-2S]-[ferredoxin] + 2 H(+). Its pathway is isoprenoid biosynthesis; dimethylallyl diphosphate biosynthesis; dimethylallyl diphosphate from (2E)-4-hydroxy-3-methylbutenyl diphosphate: step 1/1. It functions in the pathway isoprenoid biosynthesis; isopentenyl diphosphate biosynthesis via DXP pathway; isopentenyl diphosphate from 1-deoxy-D-xylulose 5-phosphate: step 6/6. Its function is as follows. Catalyzes the conversion of 1-hydroxy-2-methyl-2-(E)-butenyl 4-diphosphate (HMBPP) into a mixture of isopentenyl diphosphate (IPP) and dimethylallyl diphosphate (DMAPP). Acts in the terminal step of the DOXP/MEP pathway for isoprenoid precursor biosynthesis. This is 4-hydroxy-3-methylbut-2-enyl diphosphate reductase from Acidithiobacillus ferrooxidans (strain ATCC 53993 / BNL-5-31) (Leptospirillum ferrooxidans (ATCC 53993)).